The following is a 343-amino-acid chain: 3-dehydroquinate synthase (343 aa).

NAD(+) is bound by residues 86-90 (GALLD), 110-111 (TT), Lys-123, and Lys-132. Residues Glu-165, His-229, and His-243 each coordinate Zn(2+).

It belongs to the sugar phosphate cyclases superfamily. Dehydroquinate synthase family. It depends on Co(2+) as a cofactor. Zn(2+) serves as cofactor. NAD(+) is required as a cofactor.

It is found in the cytoplasm. The catalysed reaction is 7-phospho-2-dehydro-3-deoxy-D-arabino-heptonate = 3-dehydroquinate + phosphate. It functions in the pathway metabolic intermediate biosynthesis; chorismate biosynthesis; chorismate from D-erythrose 4-phosphate and phosphoenolpyruvate: step 2/7. Catalyzes the conversion of 3-deoxy-D-arabino-heptulosonate 7-phosphate (DAHP) to dehydroquinate (DHQ). The polypeptide is 3-dehydroquinate synthase (Pyrobaculum neutrophilum (strain DSM 2338 / JCM 9278 / NBRC 100436 / V24Sta) (Thermoproteus neutrophilus)).